We begin with the raw amino-acid sequence, 293 residues long: Ribonuclease Z (293 aa).

Residues His60, His62, Asp64, His65, His132, Asp200, and His256 each contribute to the Zn(2+) site. Asp64 acts as the Proton acceptor in catalysis.

The protein belongs to the RNase Z family. In terms of assembly, homodimer. It depends on Zn(2+) as a cofactor.

The catalysed reaction is Endonucleolytic cleavage of RNA, removing extra 3' nucleotides from tRNA precursor, generating 3' termini of tRNAs. A 3'-hydroxy group is left at the tRNA terminus and a 5'-phosphoryl group is left at the trailer molecule.. In terms of biological role, zinc phosphodiesterase, which displays some tRNA 3'-processing endonuclease activity. Probably involved in tRNA maturation, by removing a 3'-trailer from precursor tRNA. The polypeptide is Ribonuclease Z (Sulfurisphaera tokodaii (strain DSM 16993 / JCM 10545 / NBRC 100140 / 7) (Sulfolobus tokodaii)).